Here is an 86-residue protein sequence, read N- to C-terminus: Putative defensin-like protein 244 (86 aa).

A signal peptide spans 1–22 (MKGIAMLLVSCLLFSFLSTNLA). Intrachain disulfides connect Cys28–Cys83, Cys38–Cys67, Cys48–Cys77, and Cys65–Cys79.

It belongs to the DEFL family.

It is found in the secreted. This is Putative defensin-like protein 244 (SCRL11) from Arabidopsis thaliana (Mouse-ear cress).